Here is a 232-residue protein sequence, read N- to C-terminus: Thrombin-like enzyme bothrombin (232 aa).

In terms of domain architecture, Peptidase S1 spans 1 to 223 (VIGGDECDIN…YLPWIQSIIA (223 aa)). 6 disulfide bridges follow: C7/C139, C26/C42, C74/C230, C118/C184, C150/C163, and C174/C199. Catalysis depends on charge relay system residues H41 and D86. N98 and N146 each carry an N-linked (GlcNAc...) asparagine glycan. Catalysis depends on S178, which acts as the Charge relay system. N-linked (GlcNAc...) asparagine glycosylation is present at N225.

The protein belongs to the peptidase S1 family. Snake venom subfamily. As to quaternary structure, monomer. In terms of tissue distribution, expressed by the venom gland.

The protein localises to the secreted. The enzyme catalyses Selective cleavage of Arg-|-Xaa bond in fibrinogen, to form fibrin, and release fibrinopeptide A. The specificity of further degradation of fibrinogen varies with species origin of the enzyme.. With respect to regulation, inhibited by diisopropylfluorophosphate (DFP), but not by hirudin. Its function is as follows. Thrombin-like snake venom serine protease that clots fibrinogen by releasing fibrinopeptide A from the alpha chain of fibrinogen (FGA), induces platelet aggregation through its interaction with GPIb (GP1BA/GP1BB), and activates factor VIII (F8). The chain is Thrombin-like enzyme bothrombin from Bothrops jararaca (Jararaca).